The primary structure comprises 93 residues: Large ribosomal subunit protein bL27 (93 aa).

Residues Met-1–Phe-10 constitute a propeptide that is removed on maturation.

Belongs to the bacterial ribosomal protein bL27 family. The N-terminus is cleaved by ribosomal processing cysteine protease Prp.

The sequence is that of Large ribosomal subunit protein bL27 from Phytoplasma australiense.